The chain runs to 181 residues: Protein Syd (181 aa).

It belongs to the Syd family.

The protein resides in the cell inner membrane. Functionally, interacts with the SecY protein in vivo. May bind preferentially to an uncomplexed state of SecY, thus functioning either as a chelating agent for excess SecY in the cell or as a regulatory factor that negatively controls the translocase function. This Escherichia coli O81 (strain ED1a) protein is Protein Syd.